A 135-amino-acid chain; its full sequence is Small ribosomal subunit protein uS11 (135 aa).

The protein belongs to the universal ribosomal protein uS11 family. As to quaternary structure, part of the 30S ribosomal subunit. Interacts with proteins S7 and S18. Binds to IF-3.

Located on the platform of the 30S subunit, it bridges several disparate RNA helices of the 16S rRNA. Forms part of the Shine-Dalgarno cleft in the 70S ribosome. This chain is Small ribosomal subunit protein uS11, found in Cutibacterium acnes (strain DSM 16379 / KPA171202) (Propionibacterium acnes).